Consider the following 299-residue polypeptide: Delta-9 desaturase-like 2 protein (299 aa).

Residues 55-75 (WEAFRFGIILAILTNLCITFS) traverse the membrane as a helical segment. Residues 77-82 (HRNLTH) carry the Histidine box-1 motif. The short motif at 114 to 118 (HRFHH) is the Histidine box-2 element. A helical transmembrane segment spans residues 174–194 (LVLHILAFWTLIYLWGGLPYL). The Histidine box-3 signature appears at 246–250 (HNNHH). The chain crosses the membrane as a helical span at residues 262–282 (WYQLDITWYLIWFFQALGLAT).

Belongs to the fatty acid desaturase type 1 family. Requires Fe cation as cofactor.

Its subcellular location is the endoplasmic reticulum membrane. The protein operates within lipid metabolism; polyunsaturated fatty acid biosynthesis. This is Delta-9 desaturase-like 2 protein from Arabidopsis thaliana (Mouse-ear cress).